The sequence spans 100 residues: uncharacterized protein (100 aa).

This is an uncharacterized protein from Schizosaccharomyces pombe (strain 972 / ATCC 24843) (Fission yeast).